A 575-amino-acid chain; its full sequence is FAD-linked oxidoreductase asqF (575 aa).

An N-terminal signal peptide occupies residues 1 to 23 (MALFRLSAAIVVIFLYIWSPSQR). Residues Asn-45 and Asn-80 are each glycosylated (N-linked (GlcNAc...) asparagine). Residues 118 to 306 (NQGRIPLYAA…VRVTMRTYPD (189 aa)) enclose the FAD-binding PCMH-type domain. The residue at position 156 (His-156) is a Pros-8alpha-FAD histidine. Asn-370 is a glycosylation site (N-linked (GlcNAc...) asparagine).

The protein belongs to the oxygen-dependent FAD-linked oxidoreductase family. The cofactor is FAD.

It catalyses the reaction peniprequinolone + A = yaequinolone E + AH2. It functions in the pathway secondary metabolite biosynthesis. Its pathway is alkaloid biosynthesis. It participates in mycotoxin biosynthesis. Functionally, FAD-linked oxidoreductase; part of the gene cluster that mediates the biosynthesis of the aspoquinolone mycotoxins. Within the pathway, asqF performs FAD-dependent dehydrogenation of the dimethylallyl quinolone peniprequinolone to yield the conjugated aryl diene yaequinolone E. The first step of the pathway is catalyzed by the nonribosomal peptide synthetase asqK that condenses anthranilic acid and O-methyl-L-tyrosine to produce 4'-methoxycyclopeptin. 4'-methoxycyclopeptin is then converted to 4'-methoxydehydrocyclopeptin by the ketoglutarate-dependent dioxygenase asqJ. AsqJ also converts its first product 4'-methoxydehydrocyclopeptin to 4'-methoxycyclopenin. The following conversion of 4'-methoxycyclopenin into 4'-methoxyviridicatin is catalyzed by the cyclopenase asqI. 4'-methoxyviridicatin is the precursor of quinolone natural products, and is further converted to quinolinone B. The prenyltransferase asqH1 then catalyzes the canonical Friedel-Crafts alkylation of quinolinone B with dimethylallyl cation to yield dimethylallyl quinolone, which is subjected to FAD-dependent dehydrogenation by the FAD-linked oxidoreductase asqF to yield conjugated aryl diene. The delta(3') double bond then serves as the site of the second alkylation with DMAPP catalyzed by the prenyltransferase asqH2 to yield a carbenium ion intermediate, which can be attacked by H(2)O to yield a styrenyl quinolone containing a C3'-hydroxyprenyl chain. The FAD-dependent monooxygenase asqG performs epoxidation of the terminal C7'-C8' olefin. Finally, after dehydratation of the epoxide at C3 by asqC, the quinolone epoxide rearrangement protein asqO catalyzes an enzymatic 3-exo-tet cyclization to yield the cyclopropyl-THF ring system in aspoquinolone. The sequence is that of FAD-linked oxidoreductase asqF from Emericella nidulans (strain FGSC A4 / ATCC 38163 / CBS 112.46 / NRRL 194 / M139) (Aspergillus nidulans).